We begin with the raw amino-acid sequence, 444 residues long: Endoglucanase N (444 aa).

The signal sequence occupies residues 1-31 (MWMRRNQIVRKLTLGVVTTVLGMSLSFSALS). Residues His-64, 68–69 (WF), Tyr-95, and His-130 each bind substrate. The active-site Proton donor is Glu-168. Tyr-230 is a binding site for substrate. The active-site Nucleophile is Glu-256. Substrate is bound by residues 262-263 (AS), Trp-290, and 295-297 (KSE). The segment at 332–358 (ANLGGGDTPTTPTTPTEPTNPGNGTTG) is disordered. Positions 339–358 (TPTTPTTPTEPTNPGNGTTG) are enriched in low complexity. The CBM3 domain maps to 356 to 444 (TTGDVVLQYR…DKANRYVLVT (89 aa)).

This sequence belongs to the glycosyl hydrolase 5 (cellulase A) family.

It localises to the secreted. The enzyme catalyses Endohydrolysis of (1-&gt;4)-beta-D-glucosidic linkages in cellulose, lichenin and cereal beta-D-glucans.. In Pectobacterium atrosepticum (Erwinia carotovora subsp. atroseptica), this protein is Endoglucanase N (celN).